Consider the following 749-residue polypeptide: Catalase-peroxidase 2 (749 aa).

Positions 1 to 27 (MFKRTIPLFAAFTLAISPSIFPNYAHA) are cleaved as a signal peptide. The tryptophyl-tyrosyl-methioninium (Trp-Tyr) (with M-255) cross-link spans 107–229 (WHAAGTYRIY…LAATVMGLIY (123 aa)). The active-site Proton acceptor is His-108. A cross-link (tryptophyl-tyrosyl-methioninium (Tyr-Met) (with W-107)) is located at residues 229-255 (YVNPEGPNGVPDPLAAAEKIRETFGRM). His-270 contributes to the heme b binding site.

It belongs to the peroxidase family. Peroxidase/catalase subfamily. Homodimer or homotetramer. Heme b serves as cofactor. Formation of the three residue Trp-Tyr-Met cross-link is important for the catalase, but not the peroxidase activity of the enzyme.

It catalyses the reaction H2O2 + AH2 = A + 2 H2O. The catalysed reaction is 2 H2O2 = O2 + 2 H2O. In terms of biological role, bifunctional enzyme with both catalase and broad-spectrum peroxidase activity. The sequence is that of Catalase-peroxidase 2 from Legionella pneumophila (strain Lens).